We begin with the raw amino-acid sequence, 98 residues long: Cystatin-A (98 aa).

Position 1 is an N-acetylmethionine (Met1). Positions 46–50 (QVVAG) match the Secondary area of contact motif.

This sequence belongs to the cystatin family.

Its subcellular location is the cytoplasm. Functionally, this is an intracellular thiol proteinase inhibitor. The sequence is that of Cystatin-A (CSTA) from Bos taurus (Bovine).